A 316-amino-acid chain; its full sequence is D-alanine--D-alanine ligase (316 aa).

In terms of domain architecture, ATP-grasp spans 108–310; that stretch reads ERYEELSVVK…FDELVDLIIK (203 aa). 138–193 is an ATP binding site; it reads EEKIGLPCVVKPRKEGSSIGTHICFSKEELLDALKNEFKNYDEMIVQEYIKGKEIT. Residues aspartate 265, glutamate 277, and asparagine 279 each coordinate Mg(2+).

The protein belongs to the D-alanine--D-alanine ligase family. Mg(2+) is required as a cofactor. Requires Mn(2+) as cofactor.

The protein localises to the cytoplasm. The catalysed reaction is 2 D-alanine + ATP = D-alanyl-D-alanine + ADP + phosphate + H(+). It functions in the pathway cell wall biogenesis; peptidoglycan biosynthesis. Cell wall formation. This chain is D-alanine--D-alanine ligase, found in Fervidobacterium nodosum (strain ATCC 35602 / DSM 5306 / Rt17-B1).